The sequence spans 408 residues: E3 ubiquitin-protein ligase At1g12760 (408 aa).

A disordered region spans residues 1–52 (MSTETTTGNSSLIPASSSSSSSDAIDPAPLLFNGDDNEGNNGGGGGERRSVR). Over residues 10–34 (SSLIPASSSSSSSDAIDPAPLLFNG) the composition is skewed to low complexity. The next 2 helical transmembrane spans lie at 100–120 (VVVLDIVWNLAFVSVATAILV) and 133–153 (VWLLGYALQCVLHMVCVCVEY). Residues 160–195 (RTNRTTTTTPPRSRSSSSSSSSSSLEEEALGSRRNS) form a disordered region. Low complexity predominate over residues 163 to 183 (RTTTTTPPRSRSSSSSSSSSS). 3 helical membrane passes run 219–239 (ANTMFSFIWWIIGFYWVSAGG), 254–274 (IVFLGFDVFFVVFCVALACVI), and 275–295 (GIAVCCCLPCIIAVLYAVADQ). Residues 353 to 394 (CCICLSAYEDGTELRELPCGHHFHCSCVDKWLYINATCPLCK) form an RING-type; atypical zinc finger.

It localises to the membrane. It carries out the reaction S-ubiquitinyl-[E2 ubiquitin-conjugating enzyme]-L-cysteine + [acceptor protein]-L-lysine = [E2 ubiquitin-conjugating enzyme]-L-cysteine + N(6)-ubiquitinyl-[acceptor protein]-L-lysine.. The protein operates within protein modification; protein ubiquitination. In terms of biological role, mediates E2-dependent protein ubiquitination in vitro. This Arabidopsis thaliana (Mouse-ear cress) protein is E3 ubiquitin-protein ligase At1g12760.